The sequence spans 349 residues: Glycerol-3-phosphate dehydrogenase [NAD(P)+] (349 aa).

Positions 12, 13, and 107 each coordinate NADPH. 3 residues coordinate sn-glycerol 3-phosphate: K107, G138, and S140. Position 142 (A142) interacts with NADPH. Sn-glycerol 3-phosphate-binding residues include K193, D246, S256, R257, and N258. The active-site Proton acceptor is K193. R257 is a binding site for NADPH. 2 residues coordinate NADPH: V281 and E283.

It belongs to the NAD-dependent glycerol-3-phosphate dehydrogenase family.

It localises to the cytoplasm. It catalyses the reaction sn-glycerol 3-phosphate + NAD(+) = dihydroxyacetone phosphate + NADH + H(+). The catalysed reaction is sn-glycerol 3-phosphate + NADP(+) = dihydroxyacetone phosphate + NADPH + H(+). The protein operates within membrane lipid metabolism; glycerophospholipid metabolism. Its function is as follows. Catalyzes the reduction of the glycolytic intermediate dihydroxyacetone phosphate (DHAP) to sn-glycerol 3-phosphate (G3P), the key precursor for phospholipid synthesis. The sequence is that of Glycerol-3-phosphate dehydrogenase [NAD(P)+] from Pelotomaculum thermopropionicum (strain DSM 13744 / JCM 10971 / SI).